The chain runs to 549 residues: Glucose-6-phosphate isomerase (549 aa).

Residues Lys80, Lys228, and Lys234 each carry the N6-acetyllysine modification. Residue Glu355 is the Proton donor of the active site. Active-site residues include His386 and Lys514.

The protein belongs to the GPI family.

It is found in the cytoplasm. It carries out the reaction alpha-D-glucose 6-phosphate = beta-D-fructose 6-phosphate. The protein operates within carbohydrate biosynthesis; gluconeogenesis. Its pathway is carbohydrate degradation; glycolysis; D-glyceraldehyde 3-phosphate and glycerone phosphate from D-glucose: step 2/4. Its function is as follows. Catalyzes the reversible isomerization of glucose-6-phosphate to fructose-6-phosphate. The sequence is that of Glucose-6-phosphate isomerase from Shigella boydii serotype 4 (strain Sb227).